The chain runs to 193 residues: dCTP deaminase (193 aa).

DCTP is bound by residues 110 to 115, D128, 136 to 138, Y171, K178, and Q182; these read RSSLAR and VLE. E138 (proton donor/acceptor) is an active-site residue. The segment at 169-193 is disordered; the sequence is RPYNRRQDAKYKDQQGAVASRIDKD.

This sequence belongs to the dCTP deaminase family. Homotrimer.

It catalyses the reaction dCTP + H2O + H(+) = dUTP + NH4(+). Its pathway is pyrimidine metabolism; dUMP biosynthesis; dUMP from dCTP (dUTP route): step 1/2. In terms of biological role, catalyzes the deamination of dCTP to dUTP. This Pectobacterium carotovorum subsp. carotovorum (strain PC1) protein is dCTP deaminase.